The following is a 257-amino-acid chain: MTLSFTKMHGLGNDFVVIDGRQNDPALETATIRHLCDRRFGIGCDQLVLLTPPTLAGADVHVRFFNPDGSEAGACGNASRCVAKFVGGAPTLQTAAGLLPTAQDGDLFTVDMGTPRLDWQDVPLSRACDTLHLPLHDAAACSMGNPHATLFGDAFRAEALGPGLERDPLFPERANIGFAQILSPIHMRLRVWERGAGLTLACGSGACAAVVNAVRRGLTERTCTVTMDGGDLRITWREDGHVFMTGPAVTVFHGTTA.

Asn13, Gln46, and Asn66 together coordinate substrate. Cys75 acts as the Proton donor in catalysis. Substrate-binding positions include 76 to 77 (GN), Asn145, Asn175, and 193 to 194 (ER). Cys202 acts as the Proton acceptor in catalysis. Substrate is bound at residue 203-204 (GS).

Belongs to the diaminopimelate epimerase family. In terms of assembly, homodimer.

It is found in the cytoplasm. It carries out the reaction (2S,6S)-2,6-diaminopimelate = meso-2,6-diaminopimelate. The protein operates within amino-acid biosynthesis; L-lysine biosynthesis via DAP pathway; DL-2,6-diaminopimelate from LL-2,6-diaminopimelate: step 1/1. Catalyzes the stereoinversion of LL-2,6-diaminopimelate (L,L-DAP) to meso-diaminopimelate (meso-DAP), a precursor of L-lysine and an essential component of the bacterial peptidoglycan. The protein is Diaminopimelate epimerase of Gluconobacter oxydans (strain 621H) (Gluconobacter suboxydans).